Consider the following 285-residue polypeptide: MMKACGFDIGLDHPFFLIAGPCVIESRELAFETAGRLKEITGKLGVSFIYKSSFDKANRSSGKSFRGPGMDEGLKILADVRAQLDVPVLTDVHDIDQVAPVAAVVDMLQTPAFLCRQTDFIRACAATLKPVNIKKGQFLAPHDMLQVARKARDAALEAGGDGNNILVCERGASFGYNNLVSDMRSLAIMRETDCPVVFDATHSVQLPGGQGASSGGQREFVPVLARAAVAVGVAGLFMETHPNPACAMSDGPNAVPLDRMAELLESLVALDRVTKRSGFLENQFV.

The protein belongs to the KdsA family.

Its subcellular location is the cytoplasm. It catalyses the reaction D-arabinose 5-phosphate + phosphoenolpyruvate + H2O = 3-deoxy-alpha-D-manno-2-octulosonate-8-phosphate + phosphate. It functions in the pathway carbohydrate biosynthesis; 3-deoxy-D-manno-octulosonate biosynthesis; 3-deoxy-D-manno-octulosonate from D-ribulose 5-phosphate: step 2/3. The protein operates within bacterial outer membrane biogenesis; lipopolysaccharide biosynthesis. This is 2-dehydro-3-deoxyphosphooctonate aldolase from Bordetella bronchiseptica (strain ATCC BAA-588 / NCTC 13252 / RB50) (Alcaligenes bronchisepticus).